The chain runs to 373 residues: Enoyl-[acyl-carrier-protein] reductase, mitochondrial (373 aa).

Residues 1–53 (MLVSQRVTGARARAPQLAGLLEAWYRHGRTTSSYSALSEPSRVRALVYGNHGD) constitute a mitochondrion transit peptide. K61 is modified (N6-acetyllysine; alternate). An N6-succinyllysine; alternate modification is found at K61. Y94 (proton donor) is an active-site residue. NADP(+)-binding positions include N167, 193-196 (NSGV), and 216-218 (RDR). N6-acetyllysine; alternate is present on residues K252 and K267. Residues K252 and K267 each carry the N6-succinyllysine; alternate modification. NADP(+)-binding positions include 285 to 288 (YGGM) and 310 to 312 (FWL). K316 carries the post-translational modification N6-succinyllysine. K368 contacts NADP(+).

It belongs to the zinc-containing alcohol dehydrogenase family. Quinone oxidoreductase subfamily. Homodimer. In terms of tissue distribution, expressed in Purkinje cells (at protein level).

The protein resides in the mitochondrion. It carries out the reaction a 2,3-saturated acyl-[ACP] + NADP(+) = a (2E)-enoyl-[ACP] + NADPH + H(+). The enzyme catalyses (2E)-butenoyl-[ACP] + NADPH + H(+) = butanoyl-[ACP] + NADP(+). The catalysed reaction is (2E)-hexenoyl-[ACP] + NADPH + H(+) = hexanoyl-[ACP] + NADP(+). It catalyses the reaction (2E)-octenoyl-[ACP] + NADPH + H(+) = octanoyl-[ACP] + NADP(+). It carries out the reaction (2E)-decenoyl-[ACP] + NADPH + H(+) = decanoyl-[ACP] + NADP(+). The enzyme catalyses (2E)-dodecenoyl-[ACP] + NADPH + H(+) = dodecanoyl-[ACP] + NADP(+). The catalysed reaction is (2E)-tetradecenoyl-[ACP] + NADPH + H(+) = tetradecanoyl-[ACP] + NADP(+). It catalyses the reaction (2E)-hexadecenoyl-[ACP] + NADPH + H(+) = hexadecanoyl-[ACP] + NADP(+). Functionally, catalyzes the NADPH-dependent reduction of trans-2-enoyl thioesters in mitochondrial fatty acid synthesis (fatty acid synthesis type II). Fatty acid chain elongation in mitochondria uses acyl carrier protein (ACP) as an acyl group carrier, but the enzyme accepts both ACP and CoA thioesters as substrates in vitro. Displays a preference for medium-chain over short- and long-chain substrates. May provide the octanoyl chain used for lipoic acid biosynthesis, regulating protein lipoylation and mitochondrial respiratory activity particularly in Purkinje cells. Involved in iron homeostasis; affecting Fe-S cluster assembly and ceramide metabolism. Required for proper morphology and bioenergetic functions of mitochondria. Required for maintenance of neurons. The sequence is that of Enoyl-[acyl-carrier-protein] reductase, mitochondrial (Mecr) from Mus musculus (Mouse).